Consider the following 398-residue polypeptide: Succinate--CoA ligase [ADP-forming] subunit beta (398 aa).

One can recognise an ATP-grasp domain in the interval 9–250 (KQLFARYGVP…VDEEDPVELQ (242 aa)). ATP is bound by residues Lys50, 57 to 59 (GRG), Glu104, Leu107, and Glu112. The Mg(2+) site is built by Asn205 and Asp219. Residues Asn270 and 327–329 (GIM) contribute to the substrate site.

It belongs to the succinate/malate CoA ligase beta subunit family. Heterotetramer of two alpha and two beta subunits. Mg(2+) serves as cofactor.

It carries out the reaction succinate + ATP + CoA = succinyl-CoA + ADP + phosphate. It catalyses the reaction GTP + succinate + CoA = succinyl-CoA + GDP + phosphate. The protein operates within carbohydrate metabolism; tricarboxylic acid cycle; succinate from succinyl-CoA (ligase route): step 1/1. Functionally, succinyl-CoA synthetase functions in the citric acid cycle (TCA), coupling the hydrolysis of succinyl-CoA to the synthesis of either ATP or GTP and thus represents the only step of substrate-level phosphorylation in the TCA. The beta subunit provides nucleotide specificity of the enzyme and binds the substrate succinate, while the binding sites for coenzyme A and phosphate are found in the alpha subunit. The polypeptide is Succinate--CoA ligase [ADP-forming] subunit beta (Sorangium cellulosum (strain So ce56) (Polyangium cellulosum (strain So ce56))).